A 133-amino-acid polypeptide reads, in one-letter code: MVMLDTLANAMAAIKNAEMRGKGEAIIMPSSKLIANVLRILEKEGYIGGFEYIDDGRWGKFRVKLLGRINDIGVVKPRTPVSYRELAKMPEHLRKYLASRDVGLLILSTPQGVMTHREALKRKIGGIVIAYVY.

It belongs to the universal ribosomal protein uS8 family. As to quaternary structure, part of the 30S ribosomal subunit.

Functionally, one of the primary rRNA binding proteins, it binds directly to 16S rRNA central domain where it helps coordinate assembly of the platform of the 30S subunit. The chain is Small ribosomal subunit protein uS8 from Aeropyrum pernix (strain ATCC 700893 / DSM 11879 / JCM 9820 / NBRC 100138 / K1).